A 529-amino-acid chain; its full sequence is Phospholipase A1-Igamma2, chloroplastic (529 aa).

Residues 1-43 constitute a chloroplast transit peptide; the sequence is MAAIPSHNNLLTINHKNSITGSSSLNTNFSEINFPAKFRVATR. Positions 316 to 320 match the GXSXG motif; the sequence is GHSLG. S318 (acyl-ester intermediate) is an active-site residue. Catalysis depends on charge relay system residues D381 and H437.

Belongs to the AB hydrolase superfamily. Lipase family. In terms of assembly, interacts with SBP1. In terms of tissue distribution, widely expressed. Highly expressed in leaves and stems.

It localises to the plastid. The protein resides in the chloroplast. It catalyses the reaction 1,2-dihexadecanoyl-sn-glycero-3-phosphocholine + H2O = 2-hexadecanoyl-sn-glycero-3-phosphocholine + hexadecanoate + H(+). It carries out the reaction a 1,2-diacyl-3-O-(beta-D-galactosyl)-sn-glycerol + H2O = an acyl-3-O-(beta-D-galactosyl)-sn-glycerol + a fatty acid + H(+). The enzyme catalyses a 1,2-diacyl-3-O-[alpha-D-galactosyl-(1-&gt;6)-beta-D-galactosyl]-sn-glycerol + H2O = acyl-3-O-[alpha-D-galactosyl-(1-&gt;6)-beta-D-galactosyl]-sn-glycerol + a fatty acid + H(+). The catalysed reaction is a triacylglycerol + H2O = a diacylglycerol + a fatty acid + H(+). Acylhydrolase with broad specificity. Catalyzes the hydrolysis of phosphatidylcholine at the sn-1 position. Possesses moderate activity toward phosphatidylcholine (PC), monogalactosyldiacylglycerol (MGDG), digalactosyldiacylglycerol (DGDG) and triacylglycerol (TAG). This Arabidopsis thaliana (Mouse-ear cress) protein is Phospholipase A1-Igamma2, chloroplastic.